A 129-amino-acid chain; its full sequence is Small ribosomal subunit protein uS9 (129 aa).

It belongs to the universal ribosomal protein uS9 family.

The chain is Small ribosomal subunit protein uS9 from Wolinella succinogenes (strain ATCC 29543 / DSM 1740 / CCUG 13145 / JCM 31913 / LMG 7466 / NCTC 11488 / FDC 602W) (Vibrio succinogenes).